A 427-amino-acid chain; its full sequence is Serine hydroxymethyltransferase (427 aa).

120–122 (GHI) is a (6S)-5,6,7,8-tetrahydrofolate binding site. The residue at position 226 (Lys-226) is an N6-(pyridoxal phosphate)lysine.

The protein belongs to the SHMT family. Homodimer. Pyridoxal 5'-phosphate serves as cofactor.

Its subcellular location is the cytoplasm. It participates in amino-acid biosynthesis; glycine biosynthesis; glycine from L-serine: step 1/1. Its function is as follows. Catalyzes the reversible interconversion of serine and glycine with a modified folate serving as the one-carbon carrier. Also exhibits a pteridine-independent aldolase activity toward beta-hydroxyamino acids, producing glycine and aldehydes, via a retro-aldol mechanism. In Pyrococcus horikoshii (strain ATCC 700860 / DSM 12428 / JCM 9974 / NBRC 100139 / OT-3), this protein is Serine hydroxymethyltransferase.